Here is a 104-residue protein sequence, read N- to C-terminus: Iron-sulfur cluster assembly protein CyaY (104 aa).

The protein belongs to the frataxin family.

In terms of biological role, involved in iron-sulfur (Fe-S) cluster assembly. May act as a regulator of Fe-S biogenesis. This is Iron-sulfur cluster assembly protein CyaY from Aliivibrio salmonicida (strain LFI1238) (Vibrio salmonicida (strain LFI1238)).